A 114-amino-acid chain; its full sequence is Small nuclear ribonucleoprotein SmD1a (114 aa).

The Sm domain occupies 2–74 (KLVRFLMKLN…IRYYILPDSL (73 aa)). The tract at residues 87 to 114 (VKPKKPVAGKAVGRGRGRGRGRGRGRGR) is disordered. 8 tandem repeats follow at residues 99–100 (GR), 101–102 (GR), 103–104 (GR), 105–106 (GR), 107–108 (GR), 109–110 (GR), 111–112 (GR), and 113–114 (GR). Residues 99–114 (GRGRGRGRGRGRGRGR) are 8 X 2 AA tandem repeats of G-R.

The protein belongs to the snRNP core protein family.

Its subcellular location is the nucleus. It localises to the nucleus speckle. The protein localises to the nucleolus. Its function is as follows. Involved in splicing regulation. Facilitates post-transcriptional gene silencing (PTGS) by limiting the degradation of transgene aberrant RNAs by the RNA quality control (RQC) machinery, thus favoring their entry into cytoplasmic siRNA bodies where they can trigger PTGS. Does not participate in the production of small RNAs. In Arabidopsis thaliana (Mouse-ear cress), this protein is Small nuclear ribonucleoprotein SmD1a.